Here is a 419-residue protein sequence, read N- to C-terminus: Tubby-like protein 4 (419 aa).

The interval 1-96 (MAATKREPLR…EREEEEEGSS (96 aa)) is disordered. Basic and acidic residues predominate over residues 33-57 (AKEKEKENEVPTEIGRGKDGGEKKP).

Belongs to the TUB family.

This Oryza sativa subsp. japonica (Rice) protein is Tubby-like protein 4 (TULP4).